A 685-amino-acid polypeptide reads, in one-letter code: Sulfate transporter 4.1, chloroplastic (685 aa).

The transit peptide at Met1–Ser23 directs the protein to the chloroplast. Low complexity predominate over residues Val15–Leu26. Positions Val15–Ser53 are disordered. A run of 12 helical transmembrane segments spans residues Leu97–Ala117, Leu122–Gly142, Leu147–Ala167, Ile175–Leu195, Phe203–Ser223, Trp255–Gly275, Phe283–Phe303, Thr332–Ala352, Leu369–Gly389, Leu406–Phe426, Leu434–Leu454, and Leu473–Ile493. Positions Gln518 to Cys642 constitute an STAS domain.

Belongs to the SLC26A/SulP transporter (TC 2.A.53) family. As to expression, expressed both in roots and leaves.

The protein localises to the plastid. It is found in the chloroplast membrane. In terms of biological role, h(+)/sulfate cotransporter that may play a role in the regulation of sulfate assimilation. In Arabidopsis thaliana (Mouse-ear cress), this protein is Sulfate transporter 4.1, chloroplastic (SULTR4;1).